Consider the following 974-residue polypeptide: MHQHPRSSVPSPAPNFPPRPTARDDRREQEAAPSSPTVDMGSNSARGLGIEPGPQPSEQGRNAALGREALTRLNQIISNYHTKAALIILHSRVALPPSFNKGSESPRVNRWFNVELDDTDVLREPLRPWRTCDATDNRPPPLVIETYLDTKGLTNNQSLVILDENGKRWDVRESLAALQGARAKPYQSENDEIILERWRIELGESSSRLPADLGSILPTVYKKSIVLFRSLFTYSKFLPAWRFSKRNKKLRQSPALQIKYRVVDGSVARDDLSLDHLTAPLSEGSEKVVDTYSFGVTESPAGPFSVQVTYRTNCDFRVDDSEALLSSRFMGADDEIFRPSLPSDDVNRPNPEIGSVPVERKAVENPDCTRAYGSLSTFHQVGPTTGASPISTLRAMRDSGAGSPSPTDSPKRLLPPAKVVPSGRAGQIAGEGGSSNFQRRPSVSFQPFKAPPLSASPALADSPLGMSPRNMSSRIPTGTSADSRVMPPPSSAASARRPTTIASEQAISSSNSASPKPAPISRYSSSFSHRRGRLSAGANRLEDDNSSGRASATSSNAQPGSGLLTEATGTSAESIQADDENISEFLKMLDSKKDLMNSSTSASIQPGPSTTAAALARFRGMRDSNAALSDSMSQSMHMHRSSISSSKQLSGVPPMVAGTSISTASSPGKPMSPHTPHTPHTPAIRSRLSSNSVADDIETDHHSRLPRIHHDPPLEEHSSAENTRAPSSTAGAIDIPTSPRIFNPAYRRSSSAAVRRPIVTSDDDEIFPFGIRSLSLGADESANATLGATQQQNESQKDQQSPAEDRSGPSVSTTGPYRDSASLRGQMSGPTSASASSNPHVYQPRFASSRGRGYSGGHSLSSASSSLARGANLTPHLAERDQDRDGNASGSNSGNSTLEIRRGSGQRPSTGRTLSGQAPEDDEPLLFAMSDFGASRRSLDEGRHGNHGGTESAAGSRRGSGRRGAGLPGFHVWS.

A compositionally biased stretch (polar residues) spans 1-10 (MHQHPRSSVP). 5 disordered regions span residues 1 to 61 (MHQH…EQGR), 379 to 575 (HQVG…AESI), 661 to 689 (ISTASSPGKPMSPHTPHTPHTPAIRSRLS), 703 to 743 (SRLP…RIFN), and 787 to 974 (GATQ…HVWS). Positions 11–20 (SPAPNFPPRP) are enriched in pro residues. Residues 21–30 (TARDDRREQE) are compositionally biased toward basic and acidic residues. Composition is skewed to polar residues over residues 32-45 (APSSPTVDMGSNSA), 379-391 (HQVGPTTGASPIS), and 434-445 (SSNFQRRPSVSF). Residues 451–464 (PPLSASPALADSPL) show a composition bias toward low complexity. Polar residues predominate over residues 469 to 482 (RNMSSRIPTGTSAD). A compositionally biased stretch (low complexity) spans 491-521 (SAASARRPTTIASEQAISSSNSASPKPAPIS). Residues 547–559 (SGRASATSSNAQP) show a composition bias toward polar residues. A compositionally biased stretch (basic and acidic residues) spans 703 to 719 (SRLPRIHHDPPLEEHSS). Positions 720-730 (AENTRAPSSTA) are enriched in polar residues. The span at 790-800 (QQQNESQKDQQ) shows a compositional bias: low complexity. The span at 823–840 (LRGQMSGPTSASASSNPH) shows a compositional bias: polar residues. Positions 848-873 (SSRGRGYSGGHSLSSASSSLARGANL) are enriched in low complexity. Over residues 877-886 (LAERDQDRDG) the composition is skewed to basic and acidic residues. The segment covering 887 to 896 (NASGSNSGNS) has biased composition (low complexity). A compositionally biased stretch (polar residues) spans 906-916 (QRPSTGRTLSG).

It belongs to the ATG13 family. Fungi subfamily. Interacts with atg1 to form the atg1-atg13 kinase complex.

It is found in the cytoplasm. The protein resides in the preautophagosomal structure. Activates the atg1 kinase in a nutritional condition dependent manner through the TOR pathway, leading to autophagy. Also involved in cytoplasm to vacuole transport (Cvt) and more specifically in Cvt vesicle formation. Seems to play a role in the switching machinery regulating the conversion between the Cvt pathway and autophagy. Finally, atg13 is also required for glycogen storage during stationary phase. The protein is Autophagy-related protein 13 (atg13) of Penicillium rubens (strain ATCC 28089 / DSM 1075 / NRRL 1951 / Wisconsin 54-1255) (Penicillium chrysogenum).